The sequence spans 342 residues: S-adenosylmethionine:tRNA ribosyltransferase-isomerase (342 aa).

Belongs to the QueA family. As to quaternary structure, monomer.

The protein resides in the cytoplasm. It catalyses the reaction 7-aminomethyl-7-carbaguanosine(34) in tRNA + S-adenosyl-L-methionine = epoxyqueuosine(34) in tRNA + adenine + L-methionine + 2 H(+). It functions in the pathway tRNA modification; tRNA-queuosine biosynthesis. Transfers and isomerizes the ribose moiety from AdoMet to the 7-aminomethyl group of 7-deazaguanine (preQ1-tRNA) to give epoxyqueuosine (oQ-tRNA). This Campylobacter jejuni (strain RM1221) protein is S-adenosylmethionine:tRNA ribosyltransferase-isomerase.